The chain runs to 358 residues: Alanine racemase (358 aa).

The active-site Proton acceptor; specific for D-alanine is the Lys-35. N6-(pyridoxal phosphate)lysine is present on Lys-35. Position 130 (Arg-130) interacts with substrate. Tyr-255 (proton acceptor; specific for L-alanine) is an active-site residue. Position 303 (Met-303) interacts with substrate.

It belongs to the alanine racemase family. It depends on pyridoxal 5'-phosphate as a cofactor.

The catalysed reaction is L-alanine = D-alanine. It functions in the pathway amino-acid biosynthesis; D-alanine biosynthesis; D-alanine from L-alanine: step 1/1. Functionally, catalyzes the interconversion of L-alanine and D-alanine. May also act on other amino acids. This chain is Alanine racemase (alr), found in Shewanella baltica (strain OS155 / ATCC BAA-1091).